The primary structure comprises 441 residues: 3-oxo-glucose-6-phosphate:glutamate aminotransferase (441 aa).

A substrate-binding site is contributed by 98–99 (TS). 125 to 126 (GT) contributes to the pyridoxal 5'-phosphate binding site. Substrate is bound at residue Phe151. Positions 225 and 242 each coordinate pyridoxal 5'-phosphate. 244 to 246 (NPY) lines the substrate pocket. N6-(pyridoxal phosphate)lysine is present on Lys247. Residues Tyr274 and Lys282 each contribute to the substrate site. Asn292 lines the pyridoxal 5'-phosphate pocket. Tyr379 contributes to the substrate binding site.

This sequence belongs to the DegT/DnrJ/EryC1 family. Homodimer. Pyridoxal 5'-phosphate serves as cofactor.

The catalysed reaction is 3-dehydro-D-glucose 6-phosphate + L-glutamate = D-kanosamine 6-phosphate + 2-oxoglutarate. It functions in the pathway antibiotic biosynthesis; kanosamine biosynthesis. In terms of biological role, involved in the biosynthesis of kanosamine (3-amino-3-deoxy-D-glucose), which is known to have antibiotic and antifungal properties, and to be a precursor of the antibiotic neotrehalosadiamine (3,3'-diamino-3,3'-dideoxy-alpha,beta-trehalose (NTD)). Catalyzes the reversible pyridoxal phosphate-dependent transamination of 3-dehydro-alpha-D-glucose 6-phosphate to form alpha-D-kanosamine-6-phosphate. It can only use alpha-anomer and glutamate is the only amino donor. This chain is 3-oxo-glucose-6-phosphate:glutamate aminotransferase (ntdA), found in Bacillus subtilis (strain 168).